We begin with the raw amino-acid sequence, 183 residues long: MKQLLDFLPLVIFFAVYKFYDIYAATGVLIAATAIQLVITYLIYKHIEKMHLATFAMVTVFGSLTLFFHDDAFIKWKVSIVYALFAIGLIASQIMGKSALKSMLGKEMKVDDRIWAQVTWYWVGFFVLCSFANIYIAFNLPLETWVNFKVFGLTALTLINTVITVVYLYKNMQDDNSQPTDNQ.

5 helical membrane passes run 22-42 (IYAA…ITYL), 50-70 (MHLA…FFHD), 72-92 (AFIK…LIAS), 118-138 (VTWY…YIAF), and 148-168 (FKVF…VVYL).

The protein belongs to the YciB family.

It is found in the cell inner membrane. Functionally, plays a role in cell envelope biogenesis, maintenance of cell envelope integrity and membrane homeostasis. In Shewanella frigidimarina (strain NCIMB 400), this protein is Inner membrane-spanning protein YciB.